The sequence spans 591 residues: CTP synthase 1-B (591 aa).

The Glutamine amidotransferase type-1 domain occupies 300 to 554 (SIALVGKYTK…LASVGRLSQY (255 aa)). Catalysis depends on for GATase activity residues Cys399, His526, and Glu528. Residues 562–572 (SPRDTYSDRSE) are compositionally biased toward basic and acidic residues. A disordered region spans residues 562-581 (SPRDTYSDRSENSSPDAEIA).

The protein belongs to the CTP synthase family.

The catalysed reaction is UTP + L-glutamine + ATP + H2O = CTP + L-glutamate + ADP + phosphate + 2 H(+). It participates in pyrimidine metabolism; CTP biosynthesis via de novo pathway; CTP from UDP: step 2/2. In terms of biological role, this enzyme is involved in the de novo synthesis of CTP, a precursor of DNA, RNA and phospholipids. Catalyzes the ATP-dependent amination of UTP to CTP with either L-glutamine or ammonia as a source of nitrogen. The sequence is that of CTP synthase 1-B (ctps1-b) from Xenopus laevis (African clawed frog).